The primary structure comprises 461 residues: tRNA (guanine(10)-N(2))-methyltransferase TRMT11 (461 aa).

This sequence belongs to the class I-like SAM-binding methyltransferase superfamily. TRM11 methyltransferase family. Part of the heterodimeric TRMT11-TRM112 methyltransferase complex; this complex forms an active tRNA methyltransferase, where TRMT112 acts as an activator of the catalytic subunit TRMT11.

Its subcellular location is the cytoplasm. It carries out the reaction guanosine(10) in tRNA + S-adenosyl-L-methionine = N(2)-methylguanosine(10) in tRNA + S-adenosyl-L-homocysteine + H(+). In terms of biological role, catalytic subunit of the TRMT11-TRM112 methyltransferase complex, that specifically mediates the S-adenosyl-L-methionine-dependent N(2)-methylation of guanosine nucleotide at position 10 (m2G10) in tRNAs. This is one of the major tRNA (guanine-N(2))-methyltransferases. This is tRNA (guanine(10)-N(2))-methyltransferase TRMT11 from Gallus gallus (Chicken).